Consider the following 239-residue polypeptide: Ribonuclease PH (239 aa).

Phosphate contacts are provided by residues arginine 87 and 125 to 127; that span reads GTR.

The protein belongs to the RNase PH family. Homohexameric ring arranged as a trimer of dimers.

The enzyme catalyses tRNA(n+1) + phosphate = tRNA(n) + a ribonucleoside 5'-diphosphate. Its function is as follows. Phosphorolytic 3'-5' exoribonuclease that plays an important role in tRNA 3'-end maturation. Removes nucleotide residues following the 3'-CCA terminus of tRNAs; can also add nucleotides to the ends of RNA molecules by using nucleoside diphosphates as substrates, but this may not be physiologically important. Probably plays a role in initiation of 16S rRNA degradation (leading to ribosome degradation) during starvation. This chain is Ribonuclease PH, found in Acaryochloris marina (strain MBIC 11017).